The sequence spans 428 residues: Putative zinc metalloprotease SA1105 (428 aa).

His-21 is a binding site for Zn(2+). The active site involves Glu-22. His-25 provides a ligand contact to Zn(2+). Helical transmembrane passes span Phe-172–Ala-194, Gly-309–Phe-331, Ile-352–Ile-374, and Thr-401–Trp-420. A PDZ domain is found at Ala-186 to Lys-269.

The protein belongs to the peptidase M50B family. The cofactor is Zn(2+).

It is found in the cell membrane. This is Putative zinc metalloprotease SA1105 from Staphylococcus aureus (strain N315).